Consider the following 365-residue polypeptide: F-box protein At1g48060 (365 aa).

Positions 1–20 are disordered; the sequence is MKPQEEEEKNENMARKRSKS. The F-box domain maps to 20-69; it reads SSSSLSIPLDIATDIFLRLPAKSVVRFSCVAKHWSSITTAPYFTNSFETR.

The protein is F-box protein At1g48060 of Arabidopsis thaliana (Mouse-ear cress).